The following is a 985-amino-acid chain: Lateral signaling target protein 2 homolog (985 aa).

Disordered regions lie at residues 310 to 453, 498 to 520, 533 to 640, and 747 to 892; these read PLGS…ETDE, EYGAGEQQRQRHRDGQEDEPSTS, LRLP…SSLS, and DNVF…TTTA. Composition is skewed to low complexity over residues 327–348, 384–393, and 401–422; these read HPTTSSNNNNNNGDTTGTTNTH, SLSPNSTPTA, and PSHSIASTSSSATGSTHPPADW. Positions 423–453 are enriched in acidic residues; the sequence is SDGDDEDEEDDDDDIEVEEEELDSTDDETDE. Ser537 and Ser538 each carry phosphoserine. 2 stretches are compositionally biased toward basic residues: residues 563 to 589 and 596 to 607; these read VYRHRHSHRHHHRHHHHHHQRHHHHQH and HPHRTTRSGRKR. 2 stretches are compositionally biased toward low complexity: residues 629–640 and 761–770; these read ASGDTSAASSLS and NGNQANASAQ. Over residues 776 to 785 the composition is skewed to polar residues; it reads GSIQRNNTVD. Residue Ser808 is modified to Phosphoserine. A compositionally biased stretch (low complexity) spans 812 to 866; it reads QESASTSTSSSQLHQEQQQLQIQVQRQRNNSVGSNTPSSASSTSSSSEQNSPVSA. The segment covering 875–885 has biased composition (polar residues); it reads QSNNETQMPSS. Residues 904–964 form an FYVE-type zinc finger; that stretch reads DGKAPRCMSC…VCRECYVREV (61 aa). The Zn(2+) site is built by Cys910, Cys913, Cys926, Cys929, Cys934, Cys937, Cys956, and Cys959.

The protein belongs to the lst-2 family.

Its function is as follows. Negative regulator of epidermal growth factor receptor (EGFR) signaling. The sequence is that of Lateral signaling target protein 2 homolog from Drosophila ananassae (Fruit fly).